Reading from the N-terminus, the 162-residue chain is SsrA-binding protein (162 aa).

Residues 137–154 (HDKREDTKAREWDREKAR) show a composition bias toward basic and acidic residues. Residues 137 to 162 (HDKREDTKAREWDREKARIMKNKHRG) form a disordered region.

Belongs to the SmpB family.

Its subcellular location is the cytoplasm. In terms of biological role, required for rescue of stalled ribosomes mediated by trans-translation. Binds to transfer-messenger RNA (tmRNA), required for stable association of tmRNA with ribosomes. tmRNA and SmpB together mimic tRNA shape, replacing the anticodon stem-loop with SmpB. tmRNA is encoded by the ssrA gene; the 2 termini fold to resemble tRNA(Ala) and it encodes a 'tag peptide', a short internal open reading frame. During trans-translation Ala-aminoacylated tmRNA acts like a tRNA, entering the A-site of stalled ribosomes, displacing the stalled mRNA. The ribosome then switches to translate the ORF on the tmRNA; the nascent peptide is terminated with the 'tag peptide' encoded by the tmRNA and targeted for degradation. The ribosome is freed to recommence translation, which seems to be the essential function of trans-translation. The polypeptide is SsrA-binding protein (Aeromonas hydrophila subsp. hydrophila (strain ATCC 7966 / DSM 30187 / BCRC 13018 / CCUG 14551 / JCM 1027 / KCTC 2358 / NCIMB 9240 / NCTC 8049)).